A 356-amino-acid chain; its full sequence is Protein RecA (356 aa).

75–82 is an ATP binding site; the sequence is GPESSGKT.

Belongs to the RecA family.

It is found in the cytoplasm. Can catalyze the hydrolysis of ATP in the presence of single-stranded DNA, the ATP-dependent uptake of single-stranded DNA by duplex DNA, and the ATP-dependent hybridization of homologous single-stranded DNAs. It interacts with LexA causing its activation and leading to its autocatalytic cleavage. The sequence is that of Protein RecA from Burkholderia mallei (strain ATCC 23344).